The chain runs to 51 residues: uncharacterized protein (51 aa).

Residues 1 to 24 (MGGRFSGRVGIEKGGHPPSAADHS) form a disordered region.

This is an uncharacterized protein from Escherichia coli.